A 196-amino-acid chain; its full sequence is Adenylyl-sulfate kinase (196 aa).

31–38 (GLSGAGKS) contacts ATP. Residue Ser-105 is the Phosphoserine intermediate of the active site.

It belongs to the APS kinase family.

It carries out the reaction adenosine 5'-phosphosulfate + ATP = 3'-phosphoadenylyl sulfate + ADP + H(+). Its pathway is sulfur metabolism; hydrogen sulfide biosynthesis; sulfite from sulfate: step 2/3. Catalyzes the synthesis of activated sulfate. This Aeromonas salmonicida (strain A449) protein is Adenylyl-sulfate kinase.